A 574-amino-acid chain; its full sequence is Cocaine esterase (574 aa).

Residues 1-144 are 1A; that stretch reads MVDGNYSVAS…KAIAPSMASA (144 aa). Residue Y44 coordinates substrate. The active-site Acyl-ester intermediate is the S117. Residue Y118 coordinates substrate. Residues 145-240 form a 2 region; it reads DLYRAPWYGP…NDESWQSISL (96 aa). Positions 241–354 are 1B; sequence FERLGGLATP…WRDETDWPLP (114 aa). Residues D259 and H287 each act as charge relay system in the active site. The segment at 355-574 is 3; sequence DTAYTPFYLG…SHIVLPIIKR (220 aa).

It belongs to the CocE/NonD hydrolase family. Homodimer. The protein aggregates upon heat inactivation.

The protein resides in the cytoplasm. It catalyses the reaction cocaine + H2O = ecgonine methyl ester + benzoate + H(+). It functions in the pathway alkaloid degradation; cocaine degradation. Its function is as follows. Hydrolyzes cocaine to benzoate and ecgonine methyl ester, endowing the bacteria with the ability to utilize cocaine as a sole source of carbon and energy for growth, as this bacterium lives in the rhizosphere of coca plants. Also efficiently hydrolyzes cocaethylene, a more potent cocaine metabolite that has been observed in patients who concurrently abuse cocaine and alcohol. Is able to prevent cocaine-induced convulsions and lethality in rat. The polypeptide is Cocaine esterase (cocE) (Rhodococcus sp. (strain MB1 Bresler)).